The sequence spans 312 residues: MGKGKKLLITGGRGMVGRNLIACAARSGWEIIAPTSVDLDLRNAEAVEQYIRRQLPDVVVHAAGVVGGIHANIADPIHFLADNAAMALNVVMSSFRSEVVTLINLSSSCMYPACIEGPLKECDILRGPFEVTNEGYALAKTVGLKICEYIDKLPNFNYKTLIACNLYGVGDNFDPRRSHLLPAIIEKIHKASQCGSESVSIWGDGTARREFMFAYDFAKIIIKALEVPELIPSSMNVGVGKDLSVLEYYSLVARVIGWSGEFVYDLNRPVGMRSKLMDITHLTALGWVPERSLEGGIRSTYQYYITGNEVYE.

Residue 11–17 (GGRGMVG) participates in NADP(+) binding. Tyr136 serves as the catalytic Proton donor/acceptor. NADP(+)-binding residues include Lys140 and His179. Residues Lys187, Trp202, and Arg209 each coordinate substrate.

It belongs to the NAD(P)-dependent epimerase/dehydratase family. Fucose synthase subfamily.

It catalyses the reaction GDP-beta-L-fucose + NADP(+) = GDP-4-dehydro-alpha-D-rhamnose + NADPH + H(+). The protein operates within nucleotide-sugar biosynthesis; GDP-L-fucose biosynthesis via de novo pathway; GDP-L-fucose from GDP-alpha-D-mannose: step 2/2. Catalyzes the two-step NADP-dependent conversion of GDP-4-dehydro-6-deoxy-D-mannose to GDP-fucose, involving an epimerase and a reductase reaction. This chain is GDP-L-fucose synthase, found in Azorhizobium caulinodans (strain ATCC 43989 / DSM 5975 / JCM 20966 / LMG 6465 / NBRC 14845 / NCIMB 13405 / ORS 571).